Reading from the N-terminus, the 843-residue chain is Beta-mannosidase B (843 aa).

Glutamate 430 acts as the Proton donor in catalysis. N-linked (GlcNAc...) asparagine glycosylation is present at asparagine 721.

The protein belongs to the glycosyl hydrolase 2 family. Beta-mannosidase B subfamily.

It catalyses the reaction Hydrolysis of terminal, non-reducing beta-D-mannose residues in beta-D-mannosides.. Its pathway is glycan metabolism; N-glycan degradation. Functionally, exoglycosidase that cleaves the single beta-linked mannose residue from the non-reducing end of beta-mannosidic oligosaccharides of various complexity and length. Prefers mannobiose over mannotriose and has no activity against polymeric mannan. Is also severely restricted by galactosyl substitutions at the +1 subsite. This Aspergillus terreus (strain NIH 2624 / FGSC A1156) protein is Beta-mannosidase B (mndB).